We begin with the raw amino-acid sequence, 402 residues long: Putative cystathionine beta-lyase (402 aa).

An N6-(pyridoxal phosphate)lysine modification is found at Lys-236.

Belongs to the class-II pyridoxal-phosphate-dependent aminotransferase family. MalY/PatB cystathionine beta-lyase subfamily. Pyridoxal 5'-phosphate is required as a cofactor.

It carries out the reaction L,L-cystathionine + H2O = L-homocysteine + pyruvate + NH4(+). The enzyme catalyses an S-substituted L-cysteine + H2O = a thiol + pyruvate + NH4(+). Its pathway is amino-acid biosynthesis; L-methionine biosynthesis via de novo pathway; L-homocysteine from L-cystathionine: step 1/1. This is Putative cystathionine beta-lyase from Mycobacterium leprae (strain TN).